A 618-amino-acid chain; its full sequence is uncharacterized protein (618 aa).

Positions methionine 1–alanine 29 are cleaved as a signal peptide. The interval serine 598–glycine 618 is disordered.

It belongs to the mycobacterial PPE family.

This is an uncharacterized protein from Mycobacterium tuberculosis (strain ATCC 25618 / H37Rv).